We begin with the raw amino-acid sequence, 304 residues long: Porphobilinogen deaminase (304 aa).

Residue C241 is modified to S-(dipyrrolylmethanemethyl)cysteine.

This sequence belongs to the HMBS family. Monomer. Dipyrromethane serves as cofactor.

It carries out the reaction 4 porphobilinogen + H2O = hydroxymethylbilane + 4 NH4(+). It participates in porphyrin-containing compound metabolism; protoporphyrin-IX biosynthesis; coproporphyrinogen-III from 5-aminolevulinate: step 2/4. Its function is as follows. Tetrapolymerization of the monopyrrole PBG into the hydroxymethylbilane pre-uroporphyrinogen in several discrete steps. The chain is Porphobilinogen deaminase from Vesicomyosocius okutanii subsp. Calyptogena okutanii (strain HA).